Consider the following 170-residue polypeptide: Large ribosomal subunit protein bL17 (170 aa).

The segment covering 134 to 144 (ASAKAAQAQEK) has biased composition (low complexity). Residues 134-170 (ASAKAAQAQEKPAQEEEVEATSDEVAYTSEPDKAAEH) are disordered.

This sequence belongs to the bacterial ribosomal protein bL17 family. Part of the 50S ribosomal subunit. Contacts protein L32.

This Mycobacterium leprae (strain Br4923) protein is Large ribosomal subunit protein bL17.